Consider the following 245-residue polypeptide: MSQSGSVLRRNGFTFKQFFVAHDRCAMKVGTDGILLGAWAPVADVKRILDIGTGSGLLALMLAQRTDDNVPIDAVELDAGAAMQAQENVAHSPWPHRITVHTDDIQSWAPRQTVRFDLIISNPPYYEPGVECATPQREQARYTATLDHQTLLAIAADCITEDGFFCVVLPEQIGNAFTQQALNMGWHLRLRTDVAENEARLPHRVLLAFSPQAGECFSDRLVIRGSDQHYSESYTALTQAFYLFM.

The protein belongs to the methyltransferase superfamily. tRNA (adenine-N(6)-)-methyltransferase family.

It is found in the cytoplasm. It catalyses the reaction adenosine(37) in tRNA1(Val) + S-adenosyl-L-methionine = N(6)-methyladenosine(37) in tRNA1(Val) + S-adenosyl-L-homocysteine + H(+). Its function is as follows. Specifically methylates the adenine in position 37 of tRNA(1)(Val) (anticodon cmo5UAC). This chain is tRNA1(Val) (adenine(37)-N6)-methyltransferase, found in Salmonella enteritidis PT4 (strain P125109).